The chain runs to 450 residues: ATP-dependent protease ATPase subunit HslU (450 aa).

Residues Val29, 71–76 (GVGKTE), Asp261, Glu328, and Arg400 contribute to the ATP site.

The protein belongs to the ClpX chaperone family. HslU subfamily. As to quaternary structure, a double ring-shaped homohexamer of HslV is capped on each side by a ring-shaped HslU homohexamer. The assembly of the HslU/HslV complex is dependent on binding of ATP.

It is found in the cytoplasm. ATPase subunit of a proteasome-like degradation complex; this subunit has chaperone activity. The binding of ATP and its subsequent hydrolysis by HslU are essential for unfolding of protein substrates subsequently hydrolyzed by HslV. HslU recognizes the N-terminal part of its protein substrates and unfolds these before they are guided to HslV for hydrolysis. The sequence is that of ATP-dependent protease ATPase subunit HslU from Rickettsia conorii (strain ATCC VR-613 / Malish 7).